Reading from the N-terminus, the 432-residue chain is Glutamyl-tRNA reductase (432 aa).

Substrate-binding positions include 49–52 (TCNR), Ser107, 112–114 (ETQ), and Gln118. The Nucleophile role is filled by Cys50. 186 to 191 (GAGEMG) is a binding site for NADP(+).

Belongs to the glutamyl-tRNA reductase family. In terms of assembly, homodimer.

The catalysed reaction is (S)-4-amino-5-oxopentanoate + tRNA(Glu) + NADP(+) = L-glutamyl-tRNA(Glu) + NADPH + H(+). It functions in the pathway porphyrin-containing compound metabolism; protoporphyrin-IX biosynthesis; 5-aminolevulinate from L-glutamyl-tRNA(Glu): step 1/2. In terms of biological role, catalyzes the NADPH-dependent reduction of glutamyl-tRNA(Glu) to glutamate 1-semialdehyde (GSA). In Campylobacter jejuni subsp. jejuni serotype O:23/36 (strain 81-176), this protein is Glutamyl-tRNA reductase.